The primary structure comprises 347 residues: Protein phosphatase 1 regulatory subunit 3G (347 aa).

The disordered stretch occupies residues 1 to 77 (MDPSGEQLHR…ELQEYRRSRA (77 aa)). Over residues 13–22 (ASSSTSSGDP) the composition is skewed to polar residues. S81 carries the post-translational modification Phosphoserine. The CBM21 domain occupies 200–339 (EERLRRQRVC…NNEGANYTLR (140 aa)). The interval 258–286 (DPESVEPLPPLQSGDSGSKAEDSEEGPGT) is disordered.

In terms of biological role, glycogen-targeting subunit for protein phosphatase 1 (PP1). Involved in the regulation of hepatic glycogenesis in a manner coupled to the fasting-feeding cycle and distinct from other glycogen-targeting subunits. The sequence is that of Protein phosphatase 1 regulatory subunit 3G (Ppp1r3g) from Mus musculus (Mouse).